The chain runs to 1038 residues: Ras GTPase-activating protein 1 (1038 aa).

Methionine 1 carries the N-acetylmethionine modification. The segment covering 1-16 (MMAAEAGSEEGGPATA) has biased composition (low complexity). Disordered stretches follow at residues 1 to 24 (MMAA…AAAT) and 117 to 152 (ETLG…SLDG). A compositionally biased stretch (pro residues) spans 124-135 (GFPPLPPPPLLP). Residues 172-263 (WYHGKLDRTI…LKGEKLLYPV (92 aa)) enclose the SH2 1 domain. One can recognise an SH3 domain in the interval 270–332 (EDRRRVRAIL…VEDLVEEVGR (63 aa)). The region spanning 342-432 (WFHGKISKQE…VEGYYLKEPV (91 aa)) is the SH2 2 domain. The 104-residue stretch at 465–568 (NIVKKGYLLK…WMKGLQAFCS (104 aa)) folds into the PH domain. Residues 568–681 (SLRKSSPGTS…QKGHATDEWF (114 aa)) enclose the C2 domain. Tyrosine 606 is subject to Phosphotyrosine. Residues 755–965 (KLESLLLCTL…HRMIMFLDEL (211 aa)) form the Ras-GAP domain. Serine 822 carries the post-translational modification Phosphoserine.

Interacts with SQSTM1. Interacts with SPSB1; the interaction does not promote degradation. Interacts with CAV2 (tyrosine phosphorylated form). Directly interacts with NCK1. Interacts with PDGFRB (tyrosine phosphorylated). Interacts (via SH2 domain) with the 'Tyr-9' phosphorylated form of PDPK1. Interacts with tyrosine-phosphorylated EPHB4. Phosphorylated by SRC and LCK. The phosphorylation SRC inhibits its ability to stimulate the Ras-GTPase activity, whereas phosphorylation by LCK does not display any effect on stimulation activity.

The protein localises to the cytoplasm. Its function is as follows. Inhibitory regulator of the Ras-cyclic AMP pathway. Stimulates the GTPase of normal but not oncogenic Ras p21. In Rattus norvegicus (Rat), this protein is Ras GTPase-activating protein 1 (Rasa1).